A 282-amino-acid chain; its full sequence is Deoxyribonuclease-1 (282 aa).

Residues 1-22 (MRGMKLLGALLALAALLQGAVS) form the signal peptide. The N-linked (GlcNAc...) asparagine glycan is linked to Asn-40. Glu-100 is an active-site residue. Residues Cys-123 and Cys-126 are joined by a disulfide bond. N-linked (GlcNAc...) asparagine glycosylation occurs at Asn-128. His-156 is a catalytic residue. The cysteines at positions 195 and 231 are disulfide-linked.

The protein belongs to the DNase I family. The cofactor is Ca(2+). Requires Mg(2+) as cofactor. In terms of tissue distribution, principally in tissues of the digestive system. Highest levels found in urine, but also relatively abundant in semen and saliva.

Its subcellular location is the secreted. It is found in the zymogen granule. It localises to the nucleus envelope. The catalysed reaction is Endonucleolytic cleavage to 5'-phosphodinucleotide and 5'-phosphooligonucleotide end-products.. Its function is as follows. Serum endocuclease secreted into body fluids by a wide variety of exocrine and endocrine organs. Expressed by non-hematopoietic tissues and preferentially cleaves protein-free DNA. Among other functions, seems to be involved in cell death by apoptosis. Binds specifically to G-actin and blocks actin polymerization. Together with DNASE1L3, plays a key role in degrading neutrophil extracellular traps (NETs). NETs are mainly composed of DNA fibers and are released by neutrophils to bind pathogens during inflammation. Degradation of intravascular NETs by DNASE1 and DNASE1L3 is required to prevent formation of clots that obstruct blood vessels and cause organ damage following inflammation. The sequence is that of Deoxyribonuclease-1 from Homo sapiens (Human).